The chain runs to 115 residues: Large ribosomal subunit protein bL21 (115 aa).

This sequence belongs to the bacterial ribosomal protein bL21 family. In terms of assembly, part of the 50S ribosomal subunit. Contacts protein L20.

Functionally, this protein binds to 23S rRNA in the presence of protein L20. The sequence is that of Large ribosomal subunit protein bL21 from Picosynechococcus sp. (strain ATCC 27264 / PCC 7002 / PR-6) (Agmenellum quadruplicatum).